Reading from the N-terminus, the 999-residue chain is RING finger domain and kelch repeat-containing protein DDB_G0271372 (999 aa).

The RING-type zinc-finger motif lies at 7 to 49 (CPNCLKVFNNPRQLECDHILCTRCIEGVYNPGRTPIIKCPVCD). Residues 92-143 (STGSSNNNNNNNNNNNNNNNNFVINNSNNKNNGATTTTTTTTTTTNSNSNST) show a composition bias toward low complexity. Disordered regions lie at residues 92–147 (STGS…KSKV) and 159–209 (ASPK…SSPP). Positions 165-196 (GSSQGSLTTINNQKKLTLSPQRASSTTTTSVN) are enriched in polar residues. The B box-type zinc finger occupies 258–302 (AELSKCNDHDQKKFTIFCTDCDQLLCDECLNNNQQQHENHQLNKI). 4 residues coordinate Zn(2+): C263, H266, C286, and H294. The stretch at 355–402 (DIDTMIENLKERKNALISQIDKEYEEQKLELKDQIETINTTIVDIQNN) forms a coiled coil. Low complexity-rich tracts occupy residues 485-516 (GVSS…IITT) and 526-536 (SPSPTSSSSST). The segment at 485–637 (GVSSSPTGTG…TSTNGSNTKI (153 aa)) is disordered. Positions 552–612 (LSSQNYDNFG…SHGSKLNDNI (61 aa)) are enriched in polar residues. Residues 613 to 635 (NTNNNNSPSPTSSSTTSTNGSNT) are compositionally biased toward low complexity. 5 Kelch repeats span residues 655–700 (ITAR…YDNN), 702–745 (TIYR…VFDG), 748–793 (YIYL…YHPT), 796–842 (CIYV…FDGS), and 844–892 (YINI…SMNL). Over residues 904 to 924 (NSFSSISSHSSLNSSSSNNGI) the composition is skewed to low complexity. Positions 904-936 (NSFSSISSHSSLNSSSSNNGISGSGGSGGDNEI) are disordered.

This Dictyostelium discoideum (Social amoeba) protein is RING finger domain and kelch repeat-containing protein DDB_G0271372.